The sequence spans 74 residues: UPF0248 protein MK0350 (74 aa).

It belongs to the UPF0248 family.

In Methanopyrus kandleri (strain AV19 / DSM 6324 / JCM 9639 / NBRC 100938), this protein is UPF0248 protein MK0350.